Consider the following 512-residue polypeptide: GMP synthase [glutamine-hydrolyzing] (512 aa).

Residues 7-197 (TIIVLDFGSQ…VFGVCGCSEG (191 aa)) form the Glutamine amidotransferase type-1 domain. The Nucleophile role is filled by C84. Active-site residues include H171 and E173. A GMPS ATP-PPase domain is found at 198-387 (WNMENFIEVE…LGIPDEIVWR (190 aa)). Residue 225-231 (SGGVDSS) coordinates ATP.

As to quaternary structure, homodimer.

It carries out the reaction XMP + L-glutamine + ATP + H2O = GMP + L-glutamate + AMP + diphosphate + 2 H(+). It functions in the pathway purine metabolism; GMP biosynthesis; GMP from XMP (L-Gln route): step 1/1. Its function is as follows. Catalyzes the synthesis of GMP from XMP. The protein is GMP synthase [glutamine-hydrolyzing] of Bacillus cytotoxicus (strain DSM 22905 / CIP 110041 / 391-98 / NVH 391-98).